The chain runs to 277 residues: Thymidylate synthase (277 aa).

Residue Arg-21 participates in dUMP binding. (6R)-5,10-methylene-5,6,7,8-tetrahydrofolate is bound at residue His-51. 126–127 (RR) lines the dUMP pocket. Catalysis depends on Cys-159, which acts as the Nucleophile. Residues 179-182 (RSAD), Asn-190, and 220-222 (HLY) contribute to the dUMP site. Asp-182 contacts (6R)-5,10-methylene-5,6,7,8-tetrahydrofolate. Ser-276 contacts (6R)-5,10-methylene-5,6,7,8-tetrahydrofolate.

This sequence belongs to the thymidylate synthase family. Bacterial-type ThyA subfamily. As to quaternary structure, homodimer.

The protein localises to the cytoplasm. The enzyme catalyses dUMP + (6R)-5,10-methylene-5,6,7,8-tetrahydrofolate = 7,8-dihydrofolate + dTMP. It participates in pyrimidine metabolism; dTTP biosynthesis. Functionally, catalyzes the reductive methylation of 2'-deoxyuridine-5'-monophosphate (dUMP) to 2'-deoxythymidine-5'-monophosphate (dTMP) while utilizing 5,10-methylenetetrahydrofolate (mTHF) as the methyl donor and reductant in the reaction, yielding dihydrofolate (DHF) as a by-product. This enzymatic reaction provides an intracellular de novo source of dTMP, an essential precursor for DNA biosynthesis. The chain is Thymidylate synthase from Hydrogenovibrio crunogenus (strain DSM 25203 / XCL-2) (Thiomicrospira crunogena).